Consider the following 734-residue polypeptide: Ribosomal RNA large subunit methyltransferase K/L (734 aa).

Residues 43 to 154 (VGYRSCLWSR…RNQLTLSLDL (112 aa)) enclose the THUMP domain.

It belongs to the methyltransferase superfamily. RlmKL family.

It localises to the cytoplasm. It carries out the reaction guanosine(2445) in 23S rRNA + S-adenosyl-L-methionine = N(2)-methylguanosine(2445) in 23S rRNA + S-adenosyl-L-homocysteine + H(+). The catalysed reaction is guanosine(2069) in 23S rRNA + S-adenosyl-L-methionine = N(2)-methylguanosine(2069) in 23S rRNA + S-adenosyl-L-homocysteine + H(+). In terms of biological role, specifically methylates the guanine in position 2445 (m2G2445) and the guanine in position 2069 (m7G2069) of 23S rRNA. The polypeptide is Ribosomal RNA large subunit methyltransferase K/L (Hydrogenovibrio crunogenus (strain DSM 25203 / XCL-2) (Thiomicrospira crunogena)).